A 397-amino-acid chain; its full sequence is Serpin B10 (397 aa).

Residues 62–85 (RDQGVKSSPESEKKRKMEFNSSNS) form a disordered region. Positions 70–79 (PESEKKRKME) are enriched in basic and acidic residues. A Nuclear localization signal motif is present at residues 74–77 (KKRK).

Belongs to the serpin family. Ov-serpin subfamily.

It localises to the nucleus. Its subcellular location is the cytoplasm. Functionally, protease inhibitor that may play a role in the regulation of protease activities during hematopoiesis and apoptosis induced by TNF. May regulate protease activities in the cytoplasm and in the nucleus. The protein is Serpin B10 (SERPINB10) of Papio anubis (Olive baboon).